The sequence spans 97 residues: Exodeoxyribonuclease 7 small subunit (97 aa).

The disordered stretch occupies residues 1 to 21 (MAKTATPGACASDPGSGPLPE).

This sequence belongs to the XseB family. In terms of assembly, heterooligomer composed of large and small subunits.

The protein localises to the cytoplasm. It catalyses the reaction Exonucleolytic cleavage in either 5'- to 3'- or 3'- to 5'-direction to yield nucleoside 5'-phosphates.. In terms of biological role, bidirectionally degrades single-stranded DNA into large acid-insoluble oligonucleotides, which are then degraded further into small acid-soluble oligonucleotides. The chain is Exodeoxyribonuclease 7 small subunit from Burkholderia mallei (strain NCTC 10247).